A 539-amino-acid polypeptide reads, in one-letter code: Chaperonin GroEL 1 (539 aa).

ATP-binding positions include 29–32 (TLGP), 86–90 (DGTTT), Gly-413, and Asp-493.

This sequence belongs to the chaperonin (HSP60) family. As to quaternary structure, forms a cylinder of 14 subunits composed of two heptameric rings stacked back-to-back. Interacts with the co-chaperonin GroES.

The protein localises to the cytoplasm. It catalyses the reaction ATP + H2O + a folded polypeptide = ADP + phosphate + an unfolded polypeptide.. In terms of biological role, together with its co-chaperonin GroES, plays an essential role in assisting protein folding. The GroEL-GroES system forms a nano-cage that allows encapsulation of the non-native substrate proteins and provides a physical environment optimized to promote and accelerate protein folding. The polypeptide is Chaperonin GroEL 1 (Acidothermus cellulolyticus (strain ATCC 43068 / DSM 8971 / 11B)).